Here is a 213-residue protein sequence, read N- to C-terminus: Holliday junction resolvase RecU (213 aa).

Thr99, Asp101, Glu114, and Gln133 together coordinate Mg(2+).

This sequence belongs to the RecU family. It depends on Mg(2+) as a cofactor.

The protein resides in the cytoplasm. The catalysed reaction is Endonucleolytic cleavage at a junction such as a reciprocal single-stranded crossover between two homologous DNA duplexes (Holliday junction).. In terms of biological role, endonuclease that resolves Holliday junction intermediates in genetic recombination. Cleaves mobile four-strand junctions by introducing symmetrical nicks in paired strands. Promotes annealing of linear ssDNA with homologous dsDNA. Required for DNA repair, homologous recombination and chromosome segregation. The chain is Holliday junction resolvase RecU from Lactococcus lactis subsp. cremoris (strain MG1363).